Here is a 199-residue protein sequence, read N- to C-terminus: dITP/XTP pyrophosphatase (199 aa).

Residue 12–17 (SGNAGK) participates in substrate binding. Asp73 acts as the Proton acceptor in catalysis. Residue Asp73 coordinates Mg(2+). Residues Ser74, 157–160 (FGYD), Lys180, and 185–186 (HR) contribute to the substrate site.

It belongs to the HAM1 NTPase family. In terms of assembly, homodimer. Mg(2+) serves as cofactor.

The enzyme catalyses XTP + H2O = XMP + diphosphate + H(+). It catalyses the reaction dITP + H2O = dIMP + diphosphate + H(+). It carries out the reaction ITP + H2O = IMP + diphosphate + H(+). Pyrophosphatase that catalyzes the hydrolysis of nucleoside triphosphates to their monophosphate derivatives, with a high preference for the non-canonical purine nucleotides XTP (xanthosine triphosphate), dITP (deoxyinosine triphosphate) and ITP. Seems to function as a house-cleaning enzyme that removes non-canonical purine nucleotides from the nucleotide pool, thus preventing their incorporation into DNA/RNA and avoiding chromosomal lesions. The polypeptide is dITP/XTP pyrophosphatase (Neisseria meningitidis serogroup B (strain ATCC BAA-335 / MC58)).